Here is a 34-residue protein sequence, read N- to C-terminus: Surfactant protein C (34 aa).

Residue Cys4 is the site of S-palmitoyl cysteine attachment.

It is found in the secreted. The protein localises to the extracellular space. It localises to the surface film. Its function is as follows. Pulmonary surfactant associated proteins promote alveolar stability by lowering the surface tension at the air-liquid interface in the peripheral air spaces. The sequence is that of Surfactant protein C (SFTPC) from Canis lupus familiaris (Dog).